The chain runs to 859 residues: Linoleate 9S-lipoxygenase 1 (859 aa).

Residues 21–161 (VKGTVVLMKK…HYTTDRVFFS (141 aa)) enclose the PLAT domain. In terms of domain architecture, Lipoxygenase spans 164-859 (TYLPHETPAT…GRGIPNSVSI (696 aa)). The tract at residues 213–246 (KNPRPVLGGTQEYPYPRRGRTGRKPTKEDPQTES) is disordered. His519, His524, His711, Asn715, and Ile859 together coordinate Fe cation.

This sequence belongs to the lipoxygenase family. As to quaternary structure, monomer. It depends on Fe cation as a cofactor. In terms of tissue distribution, seedlings, roots, leaves, and flowers (at protein level). Expressed in guard cells.

It localises to the cytoplasm. The catalysed reaction is (9Z,12Z)-octadecadienoate + O2 = (9S)-hydroperoxy-(10E,12Z)-octadecadienoate. It catalyses the reaction (9Z,12Z,15Z)-octadecatrienoate + O2 = (9S)-hydroperoxy-(10E,12Z,15Z)-octadecatrienoate. Its pathway is lipid metabolism; oxylipin biosynthesis. In terms of biological role, 9S-lipoxygenase that can use linoleic acid or linolenic acid as substrates. Plant lipoxygenases may be involved in a number of diverse aspects of plant physiology including growth and development, pest resistance, and senescence or responses to wounding. Catalyzes the hydroperoxidation of lipids containing a cis,cis-1,4-pentadiene structure. Function as regulators of root development by controlling the emergence of lateral roots. 9S-lypoxygenase-derived oxylipins may play an antagonistic role to ethylene signaling in the control of responses involving oxidative stress, lipid peroxidation and plant defense. LOX1-derived oxylipins may be involved in stress signaling from roots to shoots in response to cadmium exposure. 9S-lypoxygenase-derived oxylipins are engaged during infection to control the balance between salicylic acid (SA) and jasmonate (JA) signaling to facilitate infection by the fungal pathogen Fusarium graminearum. 9S-lypoxygenase-derived oxylipins activate brassinosteroid signaling to promote cell wall-based defense and limit pathogen infection. The LOX1-derived compound (9S)-hydroperoxy-(10E,12Z,15Z)-octadecatrienoate protects plant tissues against infection by the bacterial pathogen Pseudomonas syringae pv tomato DC3000. The LOX1-derived oxylipins are required to trigger stomatal closure in response to both infection by the bacterial pathogen Pseudomonas syringae pv tomato DC3000, and the pathogen-associated molecular pattern (PAMP) flagellin peptide flg22. Contributes to the oxidation of free fatty acids during seed aging. The sequence is that of Linoleate 9S-lipoxygenase 1 from Arabidopsis thaliana (Mouse-ear cress).